Reading from the N-terminus, the 369-residue chain is Peptide chain release factor 2 (369 aa).

Q251 is modified (N5-methylglutamine).

The protein belongs to the prokaryotic/mitochondrial release factor family. Methylated by PrmC. Methylation increases the termination efficiency of RF2.

Its subcellular location is the cytoplasm. In terms of biological role, peptide chain release factor 2 directs the termination of translation in response to the peptide chain termination codons UGA and UAA. The sequence is that of Peptide chain release factor 2 (prfB) from Chlamydia muridarum (strain MoPn / Nigg).